The primary structure comprises 130 residues: Iron-sulfur cluster insertion protein ErpA (130 aa).

Iron-sulfur cluster contacts are provided by Cys-46, Cys-116, and Cys-118.

Belongs to the HesB/IscA family. Homodimer. Iron-sulfur cluster serves as cofactor.

Functionally, required for insertion of 4Fe-4S clusters for at least IspG. This Legionella pneumophila subsp. pneumophila (strain Philadelphia 1 / ATCC 33152 / DSM 7513) protein is Iron-sulfur cluster insertion protein ErpA.